The following is a 1574-amino-acid chain: RNA2 polyprotein (1574 aa).

A coiled-coil region spans residues 361–422 (ERVKAFSSHH…ERLRAAKEDR (62 aa)). 2 disordered regions span residues 557-579 (PPPIITAPVGQRVGGNPPTETPG) and 863-916 (RSAT…RGYT).

Specific enzymatic cleavages by RNA1 encoded picornain 3C-like protease in vivo yield mature proteins.

It is found in the host cell junction. The protein localises to the host plasmodesma. It localises to the virion. Transports viral genome to neighboring plant cells directly through plasmosdesmata, without any budding. The movement protein allows efficient cell to cell propagation, by bypassing the host cell wall barrier. Acts by forming a tubular structure at the host plasmodesmata, enlarging it enough to allow free passage of virion capsids. Functionally, capsid proteins form a capsid enclosing the viral positive strand RNA genome. Together they form an icosahedral capsid pseudo T=3 with a diameter of approximately 30 nm (Potential). This Citrus unshiu (Satsuma mandarin) protein is RNA2 polyprotein.